The following is a 248-amino-acid chain: Protein LIFEGUARD 3 (248 aa).

7 helical membrane-spanning segments follow: residues 42 to 62 (VYSI…TVVT), 74 to 94 (GLGL…LCPL), 105 to 125 (YLLL…TCAF), 130 to 150 (VILE…LYTF), 165 to 185 (FLFG…LFPL), 188 to 208 (VSVM…IVYD), and 222 to 242 (IWAA…LLTV).

This sequence belongs to the BI1 family.

It localises to the membrane. This is Protein LIFEGUARD 3 from Arabidopsis thaliana (Mouse-ear cress).